The chain runs to 248 residues: uncharacterized protein (248 aa).

A helical transmembrane segment spans residues 104–122 (CDVAACVGATWIAGGFAGA).

It is found in the membrane. This is an uncharacterized protein from Escherichia coli (strain K12).